A 307-amino-acid polypeptide reads, in one-letter code: Aspartate carbamoyltransferase catalytic subunit (307 aa).

Carbamoyl phosphate is bound by residues R58 and T59. K86 lines the L-aspartate pocket. Carbamoyl phosphate is bound by residues R108, H136, and Q139. R169 and R223 together coordinate L-aspartate. 2 residues coordinate carbamoyl phosphate: G264 and P265.

The protein belongs to the aspartate/ornithine carbamoyltransferase superfamily. ATCase family. As to quaternary structure, heterododecamer (2C3:3R2) of six catalytic PyrB chains organized as two trimers (C3), and six regulatory PyrI chains organized as three dimers (R2).

The catalysed reaction is carbamoyl phosphate + L-aspartate = N-carbamoyl-L-aspartate + phosphate + H(+). Its pathway is pyrimidine metabolism; UMP biosynthesis via de novo pathway; (S)-dihydroorotate from bicarbonate: step 2/3. In terms of biological role, catalyzes the condensation of carbamoyl phosphate and aspartate to form carbamoyl aspartate and inorganic phosphate, the committed step in the de novo pyrimidine nucleotide biosynthesis pathway. The protein is Aspartate carbamoyltransferase catalytic subunit of Moorella thermoacetica (strain ATCC 39073 / JCM 9320).